The primary structure comprises 680 residues: Chondroitin proteoglycan 4 (680 aa).

Residues 1 to 18 (MLRVNLLILLCFVPFSLN) form the signal peptide. 13 N-linked (GlcNAc...) asparagine glycosylation sites follow: N42, N59, N72, N167, N205, N458, N472, N486, N498, N526, N527, N556, and N604. The interval 460-680 (TKKAETTKKS…PLTTTLHELY (221 aa)) is disordered. A compositionally biased stretch (low complexity) spans 484-500 (AANTTAETTKTTSANIT). Over residues 520-530 (SLDTSGNNSTV) the composition is skewed to polar residues. 2 stretches are compositionally biased toward low complexity: residues 633 to 647 (GEASGEASGEASGEV) and 654 to 669 (SGYSGESPGENESSGE). O-linked (Xyl...) (chondroitin sulfate) serine glycans are attached at residues S640 and S644. N664 is a glycosylation site (N-linked (GlcNAc...) asparagine).

The protein is Chondroitin proteoglycan 4 (cpg-4) of Caenorhabditis briggsae.